Consider the following 277-residue polypeptide: Thymidylate synthase (277 aa).

Arg-21 provides a ligand contact to dUMP. His-51 contacts (6R)-5,10-methylene-5,6,7,8-tetrahydrofolate. DUMP is bound at residue 126-127; the sequence is RR. Cys-159 acts as the Nucleophile in catalysis. DUMP-binding positions include 179–182, Asn-190, and 220–222; these read RSGD and HLY. Asp-182 is a (6R)-5,10-methylene-5,6,7,8-tetrahydrofolate binding site. Position 276 (Ala-276) interacts with (6R)-5,10-methylene-5,6,7,8-tetrahydrofolate.

This sequence belongs to the thymidylate synthase family. Bacterial-type ThyA subfamily. In terms of assembly, homodimer.

The protein localises to the cytoplasm. It carries out the reaction dUMP + (6R)-5,10-methylene-5,6,7,8-tetrahydrofolate = 7,8-dihydrofolate + dTMP. It participates in pyrimidine metabolism; dTTP biosynthesis. Functionally, catalyzes the reductive methylation of 2'-deoxyuridine-5'-monophosphate (dUMP) to 2'-deoxythymidine-5'-monophosphate (dTMP) while utilizing 5,10-methylenetetrahydrofolate (mTHF) as the methyl donor and reductant in the reaction, yielding dihydrofolate (DHF) as a by-product. This enzymatic reaction provides an intracellular de novo source of dTMP, an essential precursor for DNA biosynthesis. This chain is Thymidylate synthase, found in Alcanivorax borkumensis (strain ATCC 700651 / DSM 11573 / NCIMB 13689 / SK2).